A 329-amino-acid polypeptide reads, in one-letter code: DNA-directed RNA polymerase subunit alpha (329 aa).

An alpha N-terminal domain (alpha-NTD) region spans residues 1–235; sequence MQGSVTEFLK…EQLDAFVDLR (235 aa). Residues 249–329 form an alpha C-terminal domain (alpha-CTD) region; it reads FDPILLRPVD…NWPPASIAED (81 aa).

Belongs to the RNA polymerase alpha chain family. In terms of assembly, homodimer. The RNAP catalytic core consists of 2 alpha, 1 beta, 1 beta' and 1 omega subunit. When a sigma factor is associated with the core the holoenzyme is formed, which can initiate transcription.

It carries out the reaction RNA(n) + a ribonucleoside 5'-triphosphate = RNA(n+1) + diphosphate. Functionally, DNA-dependent RNA polymerase catalyzes the transcription of DNA into RNA using the four ribonucleoside triphosphates as substrates. This is DNA-directed RNA polymerase subunit alpha from Actinobacillus pleuropneumoniae serotype 5b (strain L20).